Reading from the N-terminus, the 145-residue chain is uncharacterized protein (145 aa).

It belongs to the methyltransferase superfamily.

Its function is as follows. Probable methyltransferase. This is an uncharacterized protein from Schizosaccharomyces pombe (strain 972 / ATCC 24843) (Fission yeast).